A 426-amino-acid polypeptide reads, in one-letter code: D-tagatose-1,6-bisphosphate aldolase subunit KbaZ (426 aa).

The protein belongs to the GatZ/KbaZ family. KbaZ subfamily. In terms of assembly, forms a complex with KbaY.

Its pathway is carbohydrate metabolism; D-tagatose 6-phosphate degradation; D-glyceraldehyde 3-phosphate and glycerone phosphate from D-tagatose 6-phosphate: step 2/2. Its function is as follows. Component of the tagatose-1,6-bisphosphate aldolase KbaYZ that is required for full activity and stability of the Y subunit. Could have a chaperone-like function for the proper and stable folding of KbaY. When expressed alone, KbaZ does not show any aldolase activity. The protein is D-tagatose-1,6-bisphosphate aldolase subunit KbaZ of Escherichia coli O17:K52:H18 (strain UMN026 / ExPEC).